We begin with the raw amino-acid sequence, 638 residues long: MELQTIPNNISLANGDSKGVQLTFKNIVYKVDNKKYKKLVKKQEKAKKKNDTESSTGDMNTGVSTTIEKELTILNNVSGVIEKGELVALMGPSGSGKSTLLDILAQRKSTGKITGQLLVNGKEIGEAYKKYCSYVTQEDVLLQTSTVFETLKFYADLKLPGVSEIEKIKRVEQIIEDIGLTKRTHSKIGGVLPGGILMKGLSGGEKRRVSIGCGLVTNPSLIFLDEPTSGLDSVAALQIMKTLLNLTLKGVTVICSIHQPRPEIFALFNKVMVIIKGKMIYSGSNILEYFESLGYPCPNNTNPADFCLDSAVEIGEGERYTEICNQWQKIWENELLNEIEYPPVNVEKPKTASWGYQYWILLGRTWKDFLRNQGNFVARVGTAVVTGLLFGVCFAGLKETEADVQKILGTIFFLITGLNLTPFAVISLFLSGRTLFNAERASKIYHSFPYYMAMVTVETLIVFLVALINAAICYLFAHLRWTAGHFFFAIMVYFFVHLLSDFMISTIANLTGTSDMTFAYGSGLSVIYMLFAGFYVPTNELPKSFGWLHWVNPLFYSFVSLVVNQFEDLPLECTRPNIPVGNSTIQIPCQFSNGNQVIEYYGIDDWTRGSSFGVVVAWTVFFFWTSYLALHFLNKEKR.

Positions 42-61 (KQEKAKKKNDTESSTGDMNT) are disordered. The ABC transporter domain maps to 58–301 (DMNTGVSTTI…SLGYPCPNNT (244 aa)). 91–98 (GPSGSGKS) contributes to the ATP binding site. Residues 374–633 (GNFVARVGTA…WTSYLALHFL (260 aa)) form the ABC transmembrane type-2 domain. Transmembrane regions (helical) follow at residues 376 to 396 (FVARVGTAVVTGLLFGVCFAG), 410 to 430 (TIFFLITGLNLTPFAVISLFL), 459 to 479 (TLIVFLVALINAAICYLFAHL), 484 to 504 (GHFFFAIMVYFFVHLLSDFMI), 516 to 536 (MTFAYGSGLSVIYMLFAGFYV), 544 to 564 (SFGWLHWVNPLFYSFVSLVVN), and 612 to 632 (FGVVVAWTVFFFWTSYLALHF).

The protein belongs to the ABC transporter superfamily. ABCG family. Eye pigment precursor importer (TC 3.A.1.204) subfamily.

Its subcellular location is the membrane. The chain is ABC transporter G family member 12 (abcG12) from Dictyostelium discoideum (Social amoeba).